A 314-amino-acid polypeptide reads, in one-letter code: Small ribosomal subunit protein uS2 (314 aa).

Composition is skewed to basic and acidic residues over residues 244–265 and 271–287; these read GGHD…GHKD and DRRG…EDRA. Positions 244–314 are disordered; that stretch reads GGHDERREQE…AAPEAAPAKE (71 aa). Positions 302–314 are enriched in low complexity; that stretch reads APAAAPEAAPAKE.

This sequence belongs to the universal ribosomal protein uS2 family.

The protein is Small ribosomal subunit protein uS2 of Anaeromyxobacter dehalogenans (strain 2CP-C).